We begin with the raw amino-acid sequence, 384 residues long: Putative glycosyltransferase EpsF (384 aa).

Belongs to the glycosyltransferase group 1 family. Glycosyltransferase 4 subfamily.

Its function is as follows. May be involved in the production of the exopolysaccharide (EPS) component of the extracellular matrix during biofilm formation. EPS is responsible for the adhesion of chains of cells into bundles. Required for biofilm maintenance. This Bacillus subtilis (strain 168) protein is Putative glycosyltransferase EpsF (epsF).